A 123-amino-acid polypeptide reads, in one-letter code: Holo-[acyl-carrier-protein] synthase (123 aa).

Asp-8 and Glu-60 together coordinate Mg(2+).

The protein belongs to the P-Pant transferase superfamily. AcpS family. The cofactor is Mg(2+).

It localises to the cytoplasm. The enzyme catalyses apo-[ACP] + CoA = holo-[ACP] + adenosine 3',5'-bisphosphate + H(+). In terms of biological role, transfers the 4'-phosphopantetheine moiety from coenzyme A to a Ser of acyl-carrier-protein. In Ehrlichia chaffeensis (strain ATCC CRL-10679 / Arkansas), this protein is Holo-[acyl-carrier-protein] synthase.